We begin with the raw amino-acid sequence, 308 residues long: D-alanine--D-alanine ligase (308 aa).

An ATP-grasp domain is found at 108-303 (KLVWKAAGLP…YEALCLKVLE (196 aa)). 134-189 (EAELGLPMFVKPACEGSSLGVTKVRKAGELAQAYAEARKFDPLVLAEQFVGGGEYT) is an ATP binding site. The Mg(2+) site is built by Asp-257, Glu-270, and Asn-272.

This sequence belongs to the D-alanine--D-alanine ligase family. Mg(2+) is required as a cofactor. Requires Mn(2+) as cofactor.

Its subcellular location is the cytoplasm. The catalysed reaction is 2 D-alanine + ATP = D-alanyl-D-alanine + ADP + phosphate + H(+). The protein operates within cell wall biogenesis; peptidoglycan biosynthesis. In terms of biological role, cell wall formation. The protein is D-alanine--D-alanine ligase of Laribacter hongkongensis (strain HLHK9).